A 483-amino-acid chain; its full sequence is Homoserine O-acetyltransferase (483 aa).

Residues 47–346 (NVILICHALT…HFGHDAFLLE (300 aa)) enclose the AB hydrolase-1 domain. Catalysis depends on Ser-152, which acts as the Nucleophile. Arg-221 is a binding site for substrate. Residues Asp-307 and His-340 contribute to the active site. Asp-341 is a substrate binding site. 2 consecutive CBS domains span residues 367-423 (MSED…KISS) and 428-483 (LSRD…KGTK).

This sequence belongs to the AB hydrolase superfamily. MetX family. As to quaternary structure, homodimer.

The protein localises to the cytoplasm. The catalysed reaction is L-homoserine + acetyl-CoA = O-acetyl-L-homoserine + CoA. It participates in amino-acid biosynthesis; L-methionine biosynthesis via de novo pathway; O-acetyl-L-homoserine from L-homoserine: step 1/1. In terms of biological role, transfers an acetyl group from acetyl-CoA to L-homoserine, forming acetyl-L-homoserine. The chain is Homoserine O-acetyltransferase from Methanohalophilus mahii (strain ATCC 35705 / DSM 5219 / SLP).